A 178-amino-acid chain; its full sequence is Adenine phosphoribosyltransferase (178 aa).

The protein belongs to the purine/pyrimidine phosphoribosyltransferase family. As to quaternary structure, homodimer.

It is found in the cytoplasm. The enzyme catalyses AMP + diphosphate = 5-phospho-alpha-D-ribose 1-diphosphate + adenine. It participates in purine metabolism; AMP biosynthesis via salvage pathway; AMP from adenine: step 1/1. In terms of biological role, catalyzes a salvage reaction resulting in the formation of AMP, that is energically less costly than de novo synthesis. In Cereibacter sphaeroides (strain ATCC 17025 / ATH 2.4.3) (Rhodobacter sphaeroides), this protein is Adenine phosphoribosyltransferase.